Reading from the N-terminus, the 413-residue chain is MSDFIFTSESVTEGHPDKICDQISDAVLDALLSEDPESRVACETVVNTGLCLLTGEITSRAKLDYIKLVRKVIKEIGYEGSKAGGFDSNSCAVLVALDEQSPDISQGVNEADDINEDLENNTGAGDQGIMFGYACDETPELMPLPISLAHRLAIQLAKVRHEKVLDYLLPDGKTQVSIDYKKGVPVSINTILISTQHTAEIDGITNEEEIRQKIKEDLWINVVLPATEDLEIKPSNQKTRFLVNPTGKFVVGGPQGDAGLTGRKIIVDTYGGYARHGGGAFSGKDPTKVDRSAAYAARYVAKSIVKAKLAKKAEVQLSYAIGVAKPISILVETFGTGIISQDNLKELIKNNFDLRPAAIIKEFDLRNLPKKMGGEFFRKTASYGHFGRNDLNLPWERVEEKSAQLVEASKILL.

Histidine 15 contributes to the ATP binding site. Mg(2+) is bound at residue aspartate 17. Residue glutamate 43 participates in K(+) binding. L-methionine-binding residues include glutamate 56 and glutamine 100. Residues 100–110 (QSPDISQGVNE) form a flexible loop region. ATP contacts are provided by residues 171 to 173 (DGK), 248 to 249 (KF), aspartate 257, 263 to 264 (RK), alanine 280, and lysine 284. Aspartate 257 contacts L-methionine. Residue lysine 288 coordinates L-methionine.

The protein belongs to the AdoMet synthase family. Homotetramer; dimer of dimers. Mg(2+) is required as a cofactor. It depends on K(+) as a cofactor.

The protein resides in the cytoplasm. The enzyme catalyses L-methionine + ATP + H2O = S-adenosyl-L-methionine + phosphate + diphosphate. The protein operates within amino-acid biosynthesis; S-adenosyl-L-methionine biosynthesis; S-adenosyl-L-methionine from L-methionine: step 1/1. Its function is as follows. Catalyzes the formation of S-adenosylmethionine (AdoMet) from methionine and ATP. The overall synthetic reaction is composed of two sequential steps, AdoMet formation and the subsequent tripolyphosphate hydrolysis which occurs prior to release of AdoMet from the enzyme. The chain is S-adenosylmethionine synthase from Prochlorococcus marinus subsp. pastoris (strain CCMP1986 / NIES-2087 / MED4).